Here is a 477-residue protein sequence, read N- to C-terminus: Cysteine--tRNA ligase (477 aa).

C28 contributes to the Zn(2+) binding site. The short motif at 30–40 (PTVYDYAHIGN) is the 'HIGH' region element. Zn(2+) is bound by residues C213, H238, and E242. The short motif at 270-274 (KMSKS) is the 'KMSKS' region element. K273 is a binding site for ATP.

This sequence belongs to the class-I aminoacyl-tRNA synthetase family. In terms of assembly, monomer. It depends on Zn(2+) as a cofactor.

It is found in the cytoplasm. The catalysed reaction is tRNA(Cys) + L-cysteine + ATP = L-cysteinyl-tRNA(Cys) + AMP + diphosphate. In Chlamydia trachomatis serovar A (strain ATCC VR-571B / DSM 19440 / HAR-13), this protein is Cysteine--tRNA ligase.